The chain runs to 319 residues: MKEFIFPMKIYWEEKDKNYGRFVVEPLERGYGTTIGNALRRVLLSSIYGSAITAVKIEGVQHEFSTIEGVQEDVLQIIANLKNVRFDLKDSDLEILYLEKNAPGVVLASDIKTPPNVTIINKDAYIATINSANTTLKMEIRIERGKGYVMSDEMEQIGEAGWVVLDADFSPIKVAAFRVEATRVGDRTDYDKLTFELTTNGVVSPDTAIQQAVELIVKHMNMLTNISYEVPTLPEPMPPDELMEKLTFSIEELDISQRALNSLKRIGVTTIGELVQLTEDELKSSKNIGRKALTEIKEALKNMGFSLGMNIGEQRSSEV.

The interval methionine 1–serine 227 is alpha N-terminal domain (alpha-NTD). Positions leucine 242–valine 319 are alpha C-terminal domain (alpha-CTD).

It belongs to the RNA polymerase alpha chain family. In terms of assembly, homodimer. The RNAP catalytic core consists of 2 alpha, 1 beta, 1 beta' and 1 omega subunit. When a sigma factor is associated with the core the holoenzyme is formed, which can initiate transcription.

It carries out the reaction RNA(n) + a ribonucleoside 5'-triphosphate = RNA(n+1) + diphosphate. In terms of biological role, DNA-dependent RNA polymerase catalyzes the transcription of DNA into RNA using the four ribonucleoside triphosphates as substrates. The protein is DNA-directed RNA polymerase subunit alpha of Hydrogenobaculum sp. (strain Y04AAS1).